Consider the following 354-residue polypeptide: 4-hydroxy-2-oxovalerate aldolase 5 (354 aa).

Residues 11–263 form the Pyruvate carboxyltransferase domain; the sequence is VTVHDMCLRD…ETGCDLFKLM (253 aa). 19–20 serves as a coordination point for substrate; it reads RD. Aspartate 20 contributes to the Mn(2+) binding site. Residue histidine 23 is the Proton acceptor of the active site. Substrate is bound by residues serine 173 and histidine 202. Mn(2+) is bound by residues histidine 202 and histidine 204. Residue tyrosine 293 coordinates substrate.

The protein belongs to the 4-hydroxy-2-oxovalerate aldolase family.

It carries out the reaction (S)-4-hydroxy-2-oxopentanoate = acetaldehyde + pyruvate. This Dechloromonas aromatica (strain RCB) protein is 4-hydroxy-2-oxovalerate aldolase 5.